Consider the following 540-residue polypeptide: Growth factor receptor-bound protein 14 (540 aa).

N-acetylthreonine is present on T2. A Phosphothreonine modification is found at Q9. Residues 106-192 (KKQVIKVYSE…NKLYFRKNYA (87 aa)) enclose the Ras-associating domain. A PH domain is found at 234–342 (YPEIHGFLHA…WVTAIRLLKY (109 aa)). Phosphoserine occurs at positions 372 and 375. An SH2 domain is found at 439-535 (WFHHKISRDE…VLPCKLKHYC (97 aa)).

The protein belongs to the GRB7/10/14 family. In terms of assembly, interacts with the cytoplasmic domain of the autophosphorylated insulin receptor (INSR), through the SH2 domain. Interacts with GRB14 (via BPS domain); this interaction protects the tyrosines in the activation loop on INSR from dephosphorylation. Binds to the ankyrin repeat region of TNKS2 via its N-terminus. Interacts with activated NRAS. Interacts (via SH2 domain) with TEK/TIE2 (tyrosine phosphorylated). In terms of processing, phosphorylated on serine residues. Phosphorylated on tyrosine residues by TEK/TIE2. Expressed at high levels in the liver, kidney, pancreas, testis, ovary, heart and skeletal muscle.

It is found in the cytoplasm. Its subcellular location is the endosome membrane. Its function is as follows. Adapter protein which modulates coupling of cell surface receptor kinases with specific signaling pathways. Binds to, and suppresses signals from, the activated insulin receptor (INSR). Potent inhibitor of insulin-stimulated MAPK3 phosphorylation. Plays a critical role regulating PDPK1 membrane translocation in response to insulin stimulation and serves as an adapter protein to recruit PDPK1 to activated insulin receptor, thus promoting PKB/AKT1 phosphorylation and transduction of the insulin signal. In Homo sapiens (Human), this protein is Growth factor receptor-bound protein 14 (GRB14).